Consider the following 410-residue polypeptide: Protein BTN2 (410 aa).

2 disordered regions span residues 223-264 (INEP…TKED) and 276-410 (MQEE…IEEI). Basic and acidic residues-rich tracts occupy residues 233 to 264 (SKID…TKED) and 276 to 311 (MQEE…KESL). A coiled-coil region spans residues 243-330 (NMSESLKEEE…QQKKLQNSKS (88 aa)). The segment covering 334 to 362 (SEIEASNKNNNSNSGSAESDNESINSDSD) has biased composition (low complexity). The span at 364–373 (TLDFSVSGNT) shows a compositional bias: polar residues.

In terms of assembly, interacts with RHB1, IST2, TDA3 and YIF1.

Its subcellular location is the cytoplasm. It is found in the late endosome. V-SNARE binding protein that facilitates specific protein retrieval from a late endosome to the Golgi. Modulates the rate of arginine uptake. Involved in pH homeostasis. Required for the correct localization of IST2. May be involved in ion homeostasis together with IST2. This is Protein BTN2 (BTN2) from Saccharomyces cerevisiae (strain ATCC 204508 / S288c) (Baker's yeast).